We begin with the raw amino-acid sequence, 486 residues long: Glutamyl-tRNA(Gln) amidotransferase subunit A (486 aa).

Residues Lys79 and Ser154 each act as charge relay system in the active site. Catalysis depends on Ser178, which acts as the Acyl-ester intermediate.

It belongs to the amidase family. GatA subfamily. As to quaternary structure, heterotrimer of A, B and C subunits.

It catalyses the reaction L-glutamyl-tRNA(Gln) + L-glutamine + ATP + H2O = L-glutaminyl-tRNA(Gln) + L-glutamate + ADP + phosphate + H(+). Allows the formation of correctly charged Gln-tRNA(Gln) through the transamidation of misacylated Glu-tRNA(Gln) in organisms which lack glutaminyl-tRNA synthetase. The reaction takes place in the presence of glutamine and ATP through an activated gamma-phospho-Glu-tRNA(Gln). The polypeptide is Glutamyl-tRNA(Gln) amidotransferase subunit A (Dehalococcoides mccartyi (strain ATCC BAA-2266 / KCTC 15142 / 195) (Dehalococcoides ethenogenes (strain 195))).